Reading from the N-terminus, the 155-residue chain is SsrA-binding protein (155 aa).

The protein belongs to the SmpB family.

Its subcellular location is the cytoplasm. Its function is as follows. Required for rescue of stalled ribosomes mediated by trans-translation. Binds to transfer-messenger RNA (tmRNA), required for stable association of tmRNA with ribosomes. tmRNA and SmpB together mimic tRNA shape, replacing the anticodon stem-loop with SmpB. tmRNA is encoded by the ssrA gene; the 2 termini fold to resemble tRNA(Ala) and it encodes a 'tag peptide', a short internal open reading frame. During trans-translation Ala-aminoacylated tmRNA acts like a tRNA, entering the A-site of stalled ribosomes, displacing the stalled mRNA. The ribosome then switches to translate the ORF on the tmRNA; the nascent peptide is terminated with the 'tag peptide' encoded by the tmRNA and targeted for degradation. The ribosome is freed to recommence translation, which seems to be the essential function of trans-translation. In Halothermothrix orenii (strain H 168 / OCM 544 / DSM 9562), this protein is SsrA-binding protein.